A 572-amino-acid chain; its full sequence is MDRAGADMWASTFTLAMAERKPQDVWVLLPEHSLVPGCLDGGGVQYLLVGLSRLQCGHCPGTWDSAHVHVLFHLWWDRASHRGLVKMRIWGQRCRLCPAPGDCQVRPPGEQPFLSRLVLHILQDCYGDGPGPARHPREAYEGCCEACELGVCFLQKAPDPAWSANATKGNFPATAWGGTGTVSRGKPLSTPGDDLGKGGVVIAIPFSLVGTSNDQVPIAEGPAPPAGASLPVTGSCEALVIGQGSIFLSGDSVAMPGGKGFPVAIGDPLFHGPGLLGSSIQTFELKGFLFKGRGSLCSPVGVAQGWGPISLNNGLVPVGKHTPTVFYCVGLSASGEGSLTFPSSLTSIFTNTLSEPTDGPVATKEASITFPFIFTDVKDAVAEVAEGNGKEGGGQGLVPVGHDALPETNAGGLPSQVKGSLALPFPADVQGKDAFTDITEGKEKEGGLVTAGHDAPLEANAEGPITVSEGCITIPFAVFDVIKRKGGGHVAYGPQGNGCFSQGYYQKRQLRSRFHKARCGCRREEDERPGRACRRPHAEPYEDFWIWVSMTVCVFWLMCMCRLNPGIYPQQV.

The 3CxxC-type zinc-finger motif lies at Ser-52–Glu-148. A helical membrane pass occupies residues Phe-544–Met-560.

It is found in the membrane. The protein is Receptor-transporting protein 5 (RTP5) of Homo sapiens (Human).